We begin with the raw amino-acid sequence, 251 residues long: uncharacterized protein (251 aa).

Residues 207 to 251 (ATPHSKRGRTKLYRKEPPGDNRSPPPWQEPHGEGLAEKLSPGPAR) form a disordered region.

This is an uncharacterized protein from Treponema pallidum (strain Nichols).